The chain runs to 92 residues: RNA-binding protein Hfq (92 aa).

A Sm domain is found at 9 to 68 (DPFLNALRRERVPVSVYLVNGIKLQGTIESFDQFVVLLRNTVSQMVYKHAISTVVPARNV).

It belongs to the Hfq family. As to quaternary structure, homohexamer.

Functionally, RNA chaperone that binds small regulatory RNA (sRNAs) and mRNAs to facilitate mRNA translational regulation in response to envelope stress, environmental stress and changes in metabolite concentrations. Also binds with high specificity to tRNAs. This is RNA-binding protein Hfq from Xylella fastidiosa (strain M12).